The chain runs to 459 residues: 1,3-beta-glucanosyltransferase gas2 (459 aa).

The N-terminal stretch at methionine 1–alanine 19 is a signal peptide. N-linked (GlcNAc...) asparagine glycosylation is found at asparagine 34 and asparagine 68. An intrachain disulfide couples cysteine 69 to cysteine 98. Tyrosine 87 provides a ligand contact to (1,3-beta-D-glucosyl)n. N-linked (GlcNAc...) asparagine glycans are attached at residues asparagine 90, asparagine 104, and asparagine 146. Residues asparagine 155 and glutamate 156 each contribute to the (1,3-beta-D-glucosyl)n site. The Proton donor role is filled by glutamate 156. Asparagine 160 is a glycosylation site (N-linked (GlcNAc...) asparagine). 2 residues coordinate (1,3-beta-D-glucosyl)n: aspartate 197 and arginine 202. 2 cysteine pairs are disulfide-bonded: cysteine 211–cysteine 350 and cysteine 235–cysteine 266. N-linked (GlcNAc...) asparagine glycosylation is found at asparagine 212, asparagine 218, and asparagine 254. The active-site Nucleophile is the glutamate 263. Asparagine 284 carries N-linked (GlcNAc...) asparagine glycosylation. Residue tyrosine 295 participates in (1,3-beta-D-glucosyl)n binding. 5 N-linked (GlcNAc...) asparagine glycosylation sites follow: asparagine 308, asparagine 334, asparagine 344, asparagine 354, and asparagine 370. 3 disulfides stabilise this stretch: cysteine 374-cysteine 427, cysteine 383-cysteine 449, and cysteine 402-cysteine 409. Residue asparagine 423 is glycosylated (N-linked (GlcNAc...) asparagine).

This sequence belongs to the glycosyl hydrolase 72 family.

The protein localises to the endoplasmic reticulum lumen. It localises to the secreted. Functionally, splits internally a 1,3-beta-glucan molecule and transfers the newly generated reducing end (the donor) to the non-reducing end of another 1,3-beta-glucan molecule (the acceptor) forming a 1,3-beta linkage, resulting in the elongation of 1,3-beta-glucan chains in the cell wall. The polypeptide is 1,3-beta-glucanosyltransferase gas2 (gas2) (Schizosaccharomyces pombe (strain 972 / ATCC 24843) (Fission yeast)).